We begin with the raw amino-acid sequence, 73 residues long: UPF0346 protein SAS1364 (73 aa).

The protein belongs to the UPF0346 family.

This Staphylococcus aureus (strain MSSA476) protein is UPF0346 protein SAS1364.